Here is a 179-residue protein sequence, read N- to C-terminus: MLNMKEQYTKEVVPALQKEFGYKNVMQVPRIEKITLNMGVGEAVGDKKLIENAVADLERLAGQKVVVTKARKSVAGFKIREGWPIGCKVTLRGERMWDFFDRLVHIAVPRIRDFRGLNPKSFDGRGNYSMGVREQIIFPEIEYDKVDKIRGLDITITTTAGTDDEGRELLKAFGFPFKK.

This sequence belongs to the universal ribosomal protein uL5 family. In terms of assembly, part of the 50S ribosomal subunit; part of the 5S rRNA/L5/L18/L25 subcomplex. Contacts the 5S rRNA and the P site tRNA. Forms a bridge to the 30S subunit in the 70S ribosome.

Its function is as follows. This is one of the proteins that bind and probably mediate the attachment of the 5S RNA into the large ribosomal subunit, where it forms part of the central protuberance. In the 70S ribosome it contacts protein S13 of the 30S subunit (bridge B1b), connecting the 2 subunits; this bridge is implicated in subunit movement. Contacts the P site tRNA; the 5S rRNA and some of its associated proteins might help stabilize positioning of ribosome-bound tRNAs. The chain is Large ribosomal subunit protein uL5 from Marinobacter nauticus (strain ATCC 700491 / DSM 11845 / VT8) (Marinobacter aquaeolei).